A 252-amino-acid chain; its full sequence is Ditrans,polycis-undecaprenyl-diphosphate synthase ((2E,6E)-farnesyl-diphosphate specific) (252 aa).

Residue aspartate 25 is part of the active site. A Mg(2+)-binding site is contributed by aspartate 25. Substrate contacts are provided by residues 26-29 (GNGR), tryptophan 30, arginine 38, histidine 42, and 70-72 (SSE). Residue asparagine 73 is the Proton acceptor of the active site. Positions 74, 76, and 193 each coordinate substrate. Histidine 198 lines the Mg(2+) pocket. Substrate is bound at residue 199–201 (RIS). Glutamate 212 lines the Mg(2+) pocket.

This sequence belongs to the UPP synthase family. As to quaternary structure, homodimer. It depends on Mg(2+) as a cofactor.

The enzyme catalyses 8 isopentenyl diphosphate + (2E,6E)-farnesyl diphosphate = di-trans,octa-cis-undecaprenyl diphosphate + 8 diphosphate. Catalyzes the sequential condensation of isopentenyl diphosphate (IPP) with (2E,6E)-farnesyl diphosphate (E,E-FPP) to yield (2Z,6Z,10Z,14Z,18Z,22Z,26Z,30Z,34E,38E)-undecaprenyl diphosphate (di-trans,octa-cis-UPP). UPP is the precursor of glycosyl carrier lipid in the biosynthesis of bacterial cell wall polysaccharide components such as peptidoglycan and lipopolysaccharide. The sequence is that of Ditrans,polycis-undecaprenyl-diphosphate synthase ((2E,6E)-farnesyl-diphosphate specific) from Salmonella paratyphi A (strain ATCC 9150 / SARB42).